A 228-amino-acid chain; its full sequence is Small ribosomal subunit protein uS2 (228 aa).

It belongs to the universal ribosomal protein uS2 family.

The polypeptide is Small ribosomal subunit protein uS2 (Blochmanniella pennsylvanica (strain BPEN)).